The following is a 329-amino-acid chain: Beta-ketoacyl-[acyl-carrier-protein] synthase III (329 aa).

Residues Cys113 and His255 contribute to the active site. The segment at 256–260 is ACP-binding; it reads QANQR. Residue Asn285 is part of the active site.

Belongs to the thiolase-like superfamily. FabH family. In terms of assembly, homodimer.

It localises to the cytoplasm. The catalysed reaction is malonyl-[ACP] + acetyl-CoA + H(+) = 3-oxobutanoyl-[ACP] + CO2 + CoA. It functions in the pathway lipid metabolism; fatty acid biosynthesis. Its function is as follows. Catalyzes the condensation reaction of fatty acid synthesis by the addition to an acyl acceptor of two carbons from malonyl-ACP. Catalyzes the first condensation reaction which initiates fatty acid synthesis and may therefore play a role in governing the total rate of fatty acid production. Possesses both acetoacetyl-ACP synthase and acetyl transacylase activities. Its substrate specificity determines the biosynthesis of branched-chain and/or straight-chain of fatty acids. This chain is Beta-ketoacyl-[acyl-carrier-protein] synthase III, found in Chlorobium chlorochromatii (strain CaD3).